A 551-amino-acid polypeptide reads, in one-letter code: HTH-type transcriptional regulator SgrR (551 aa).

The HTH marR-type domain occupies 1 to 116 (MPSARLQQQF…LVSHLGRSFR (116 aa)). Positions 26-49 (LNELAALLSCSRRHMRTLLNTMQD) form a DNA-binding region, H-T-H motif. Residues 163–492 (ELEADIAHHW…IDWQADAARW (330 aa)) form a solute-binding region.

Activates the small RNA gene sgrS under glucose-phosphate stress conditions as well as yfdZ. Represses its own transcription under both stress and non-stress conditions. Might act as a sensor of the intracellular accumulation of phosphoglucose by binding these molecules in its C-terminal solute-binding domain. The chain is HTH-type transcriptional regulator SgrR from Shigella sonnei (strain Ss046).